A 263-amino-acid polypeptide reads, in one-letter code: uncharacterized protein (263 aa).

Residues 1–22 (MEYLKRLALLISVIILTIFIMG) form the signal peptide. The N-palmitoyl cysteine moiety is linked to residue cysteine 23. A lipid anchor (S-diacylglycerol cysteine) is attached at cysteine 23.

This sequence belongs to the staphylococcal tandem lipoprotein family.

It is found in the cell membrane. This is an uncharacterized protein from Staphylococcus aureus (strain USA300).